The following is a 62-amino-acid chain: Small ribosomal subunit protein bS21 (62 aa).

It belongs to the bacterial ribosomal protein bS21 family.

This Mycoplasma genitalium (strain ATCC 33530 / DSM 19775 / NCTC 10195 / G37) (Mycoplasmoides genitalium) protein is Small ribosomal subunit protein bS21 (rpsU).